We begin with the raw amino-acid sequence, 241 residues long: RecQ-mediated genome instability protein 1 (241 aa).

It belongs to the RMI1 family. As to quaternary structure, forms a complex with SGS1 and TOP3.

It localises to the cytoplasm. Its subcellular location is the nucleus. Functionally, structure-specific DNA-binding protein with a preference for cruciform structures. Also binds single-stranded DNA (ssDNA). Functions together with SGS1 and TOP3 to maintain genome integrity. Essential for proper meiotic cell division. Required for normal S-phase progression and DNA damage response. Required for resistance to the DNA-damaging agent methyl methanesulfonate (MMS). The protein is RecQ-mediated genome instability protein 1 of Saccharomyces cerevisiae (strain ATCC 204508 / S288c) (Baker's yeast).